Here is a 152-residue protein sequence, read N- to C-terminus: Putative NrdI-like protein (152 aa).

It belongs to the NrdI family.

The polypeptide is Putative NrdI-like protein (Streptococcus pyogenes serotype M18 (strain MGAS8232)).